A 69-amino-acid polypeptide reads, in one-letter code: Conotoxin Eb6.1 (69 aa).

A signal peptide spans 1–17; it reads VLIIAVLFLTACQLTTA. Residues 18–41 constitute a propeptide that is removed on maturation; sequence ETYSRGRQKHRARRSTDKNSKWTR. 3 disulfides stabilise this stretch: cysteine 43–cysteine 57, cysteine 50–cysteine 61, and cysteine 56–cysteine 68.

This sequence belongs to the conotoxin O1 superfamily. As to expression, expressed by the venom duct.

It localises to the secreted. The protein is Conotoxin Eb6.1 (E1) of Conus ebraeus (Hebrew cone).